Consider the following 365-residue polypeptide: tRNA/tmRNA (uracil-C(5))-methyltransferase (365 aa).

Positions 189, 217, 222, 238, and 298 each coordinate S-adenosyl-L-methionine. The active-site Nucleophile is the cysteine 323. The active-site Proton acceptor is the glutamate 357.

The protein belongs to the class I-like SAM-binding methyltransferase superfamily. RNA M5U methyltransferase family. TrmA subfamily.

The catalysed reaction is uridine(54) in tRNA + S-adenosyl-L-methionine = 5-methyluridine(54) in tRNA + S-adenosyl-L-homocysteine + H(+). It catalyses the reaction uridine(341) in tmRNA + S-adenosyl-L-methionine = 5-methyluridine(341) in tmRNA + S-adenosyl-L-homocysteine + H(+). In terms of biological role, dual-specificity methyltransferase that catalyzes the formation of 5-methyluridine at position 54 (m5U54) in all tRNAs, and that of position 341 (m5U341) in tmRNA (transfer-mRNA). The polypeptide is tRNA/tmRNA (uracil-C(5))-methyltransferase (Shewanella sp. (strain W3-18-1)).